Consider the following 158-residue polypeptide: NAD(P)H-quinone oxidoreductase subunit J, chloroplastic (158 aa).

It belongs to the complex I 30 kDa subunit family. In terms of assembly, NDH is composed of at least 16 different subunits, 5 of which are encoded in the nucleus.

The protein resides in the plastid. Its subcellular location is the chloroplast thylakoid membrane. The catalysed reaction is a plastoquinone + NADH + (n+1) H(+)(in) = a plastoquinol + NAD(+) + n H(+)(out). It catalyses the reaction a plastoquinone + NADPH + (n+1) H(+)(in) = a plastoquinol + NADP(+) + n H(+)(out). Functionally, NDH shuttles electrons from NAD(P)H:plastoquinone, via FMN and iron-sulfur (Fe-S) centers, to quinones in the photosynthetic chain and possibly in a chloroplast respiratory chain. The immediate electron acceptor for the enzyme in this species is believed to be plastoquinone. Couples the redox reaction to proton translocation, and thus conserves the redox energy in a proton gradient. The sequence is that of NAD(P)H-quinone oxidoreductase subunit J, chloroplastic from Oenothera argillicola (Appalachian evening primrose).